The chain runs to 711 residues: Polyribonucleotide nucleotidyltransferase (711 aa).

Mg(2+) is bound by residues Asp486 and Asp492. A KH domain is found at Pro553 to Ile612. Residues Gly622–Lys690 enclose the S1 motif domain. The interval Ile689–Glu711 is disordered. Residues Glu694–Glu711 show a composition bias toward low complexity.

The protein belongs to the polyribonucleotide nucleotidyltransferase family. In terms of assembly, component of the RNA degradosome, which is a multiprotein complex involved in RNA processing and mRNA degradation. Mg(2+) serves as cofactor.

The protein localises to the cytoplasm. It carries out the reaction RNA(n+1) + phosphate = RNA(n) + a ribonucleoside 5'-diphosphate. In terms of biological role, involved in mRNA degradation. Catalyzes the phosphorolysis of single-stranded polyribonucleotides processively in the 3'- to 5'-direction. This Shigella flexneri serotype 5b (strain 8401) protein is Polyribonucleotide nucleotidyltransferase.